The following is a 310-amino-acid chain: MAGAAPTTAFGQAVIGPPGSGKTTYCLGMSEFLRALGRRVAVVNLDPANDGLPYECAVDVGELVGLGDVMDALRLGPNGGLLYCMEYLEANLDWLRAKLEPLRGHYFLFDCPGQVELCTHHTALRSIFSQMAQWDLRLTAVHLVDSHYCTDPAKFISVLCTSLATMLHVELPHINLLSKMDLIEHYGKLAFNLDYYTEVLDLSYLLEHLASDPFFRRYRQLNEKLVQLVEDYSLVSFIPLNIQDKDSIQRVLQAVDKANGYCFGVQEQRSLEAMMSAAMGADFHFSSTLGIQEKYLAPSEQTAEQEAMQL.

Alanine 2 carries the N-acetylalanine modification. Glycine 19–threonine 24 is a binding site for GTP. The Gly-Pro-Asn (GPN)-loop; involved in dimer interface motif lies at glycine 76–asparagine 78. Residue serine 178–aspartate 181 coordinates GTP.

This sequence belongs to the GPN-loop GTPase family. In terms of assembly, heterodimers with GPN1 or GPN3. Binds to RNA polymerase II (RNAPII).

Functionally, small GTPase required for proper localization of RNA polymerase II and III (RNAPII and RNAPIII). May act at an RNAP assembly step prior to nuclear import. This is GPN-loop GTPase 2 from Mus musculus (Mouse).